The chain runs to 296 residues: Probable lipid kinase YegS-like (296 aa).

The DAGKc domain maps to 1–130; it reads MPHTLLILNG…IDLAQVNDKH (130 aa). Residues Thr37, 63-69, and Thr92 contribute to the ATP site; that span reads GDGTINE. Residues Leu212, Asp215, and Leu217 each coordinate Mg(2+). The Proton acceptor role is filled by Glu268.

This sequence belongs to the diacylglycerol/lipid kinase family. YegS lipid kinase subfamily. Mg(2+) is required as a cofactor. Requires Ca(2+) as cofactor.

It is found in the cytoplasm. Its function is as follows. Probably phosphorylates lipids; the in vivo substrate is unknown. The polypeptide is Probable lipid kinase YegS-like (Yersinia enterocolitica serotype O:8 / biotype 1B (strain NCTC 13174 / 8081)).